The following is a 416-amino-acid chain: Multifunctional CCA protein (416 aa).

Residues G8 and R11 each coordinate ATP. CTP is bound by residues G8 and R11. The Mg(2+) site is built by D21 and D23. R91, R138, and R141 together coordinate ATP. CTP contacts are provided by R91, R138, and R141. One can recognise an HD domain in the interval 229–331 (TGLHQELVSD…YELLQRCDAF (103 aa)).

This sequence belongs to the tRNA nucleotidyltransferase/poly(A) polymerase family. Bacterial CCA-adding enzyme type 1 subfamily. In terms of assembly, monomer. Can also form homodimers and oligomers. The cofactor is Mg(2+). It depends on Ni(2+) as a cofactor.

The catalysed reaction is a tRNA precursor + 2 CTP + ATP = a tRNA with a 3' CCA end + 3 diphosphate. It carries out the reaction a tRNA with a 3' CCA end + 2 CTP + ATP = a tRNA with a 3' CCACCA end + 3 diphosphate. Its function is as follows. Catalyzes the addition and repair of the essential 3'-terminal CCA sequence in tRNAs without using a nucleic acid template. Adds these three nucleotides in the order of C, C, and A to the tRNA nucleotide-73, using CTP and ATP as substrates and producing inorganic pyrophosphate. tRNA 3'-terminal CCA addition is required both for tRNA processing and repair. Also involved in tRNA surveillance by mediating tandem CCA addition to generate a CCACCA at the 3' terminus of unstable tRNAs. While stable tRNAs receive only 3'-terminal CCA, unstable tRNAs are marked with CCACCA and rapidly degraded. The chain is Multifunctional CCA protein from Xylella fastidiosa (strain M23).